The primary structure comprises 180 residues: Large ribosomal subunit protein uL5 (180 aa).

It belongs to the universal ribosomal protein uL5 family. As to quaternary structure, part of the 50S ribosomal subunit; part of the 5S rRNA/L5/L18/L25 subcomplex. Contacts the 5S rRNA and the P site tRNA. Forms a bridge to the 30S subunit in the 70S ribosome.

Its function is as follows. This is one of the proteins that bind and probably mediate the attachment of the 5S RNA into the large ribosomal subunit, where it forms part of the central protuberance. In the 70S ribosome it contacts protein S13 of the 30S subunit (bridge B1b), connecting the 2 subunits; this bridge is implicated in subunit movement. Contacts the P site tRNA; the 5S rRNA and some of its associated proteins might help stabilize positioning of ribosome-bound tRNAs. The polypeptide is Large ribosomal subunit protein uL5 (Roseiflexus sp. (strain RS-1)).